The chain runs to 126 residues: MAITKEEVISFIENMSVLELANLVKELEEKFGVSAAAPVAVAAAGPAAGPAEAAEEKTEFDVILKSAGANKIAVIKVVRALTSLGLKEAKDLVDGAPQPVKTGISKEEAADAQKQLVEAGAEVEVK.

It belongs to the bacterial ribosomal protein bL12 family. As to quaternary structure, homodimer. Part of the ribosomal stalk of the 50S ribosomal subunit. Forms a multimeric L10(L12)X complex, where L10 forms an elongated spine to which 2 to 4 L12 dimers bind in a sequential fashion. Binds GTP-bound translation factors.

Functionally, forms part of the ribosomal stalk which helps the ribosome interact with GTP-bound translation factors. Is thus essential for accurate translation. This is Large ribosomal subunit protein bL12 from Geobacter sp. (strain M21).